The chain runs to 1093 residues: ATP-dependent helicase/deoxyribonuclease subunit B (1093 aa).

It belongs to the helicase family. AddB/RexB type 2 subfamily. In terms of assembly, heterodimer of AddA and RexB. Requires Mg(2+) as cofactor.

Its function is as follows. The heterodimer acts as both an ATP-dependent DNA helicase and an ATP-dependent, dual-direction single-stranded exonuclease. Recognizes the chi site generating a DNA molecule suitable for the initiation of homologous recombination. This subunit has 5' -&gt; 3' nuclease activity but not helicase activity. The polypeptide is ATP-dependent helicase/deoxyribonuclease subunit B (Streptococcus sanguinis (strain SK36)).